The following is a 391-amino-acid chain: F-box protein At2g34280 (391 aa).

In terms of domain architecture, F-box spans 1–43 (MDLLPYDVVEHILERLDVKSLLNCKSVSKQWRSTIRCRAFQER).

This is F-box protein At2g34280 from Arabidopsis thaliana (Mouse-ear cress).